The primary structure comprises 587 residues: Dynein axonemal intermediate chain 2 (587 aa).

WD repeat units follow at residues 214 to 254 (RPAS…NPVE), 261 to 302 (SHRD…EPTE), 362 to 401 (GHHGPIYSIQRNPFFPKNFLTVGDWTARIWSEDCRESSIM), and 405 to 445 (YHTS…NNPS). Disordered regions lie at residues 519–542 (LKERSKAEPGEEVKDEKPAEDMKE) and 562–587 (KEQQEIKQSEDEHQEKEVSEEKIVHE).

The protein belongs to the dynein intermediate chain family. As to quaternary structure, consists of at least two heavy chains and a number of intermediate and light chains. Interacts with DNAAF2. Interacts with DNAAF6/PIH1D3. Interacts with HEATR2; probably involved in outer arm dynein assembly. Interacts with C16ORF71/DAAP1.

The protein resides in the cytoplasm. Its subcellular location is the cytoskeleton. It is found in the cilium axoneme. The protein localises to the dynein axonemal particle. In terms of biological role, part of the dynein complex of multiciliated cell cilia. In Xenopus laevis (African clawed frog), this protein is Dynein axonemal intermediate chain 2 (dnai2).